A 982-amino-acid chain; its full sequence is Nitrate reductase [NADPH] (982 aa).

The interval Met1–Leu128 is disordered. Over residues Gln10–Gln20 the composition is skewed to basic and acidic residues. Low complexity predominate over residues Thr63 to Ser110. Mo-molybdopterin is bound at residue Cys240. The 76-residue stretch at Thr617–Thr692 folds into the Cytochrome b5 heme-binding domain. Heme is bound by residues His652 and His675. The FAD-binding FR-type domain occupies Lys721 to Gln836. Residues Arg776–Thr779, Leu794–Tyr798, Gln810–Thr812, Ser860, and Thr863 contribute to the FAD site. Met952 to Met961 contacts NADP(+).

It belongs to the nitrate reductase family. In terms of assembly, homodimer. It depends on FAD as a cofactor. The cofactor is heme. Requires Mo-molybdopterin as cofactor.

It carries out the reaction nitrite + NADP(+) + H2O = nitrate + NADPH + H(+). The protein operates within nitrogen metabolism; nitrate reduction (assimilation). Nitrate reductase is a key enzyme involved in the first step of nitrate assimilation in plants, fungi and bacteria. The chain is Nitrate reductase [NADPH] (nit-3) from Neurospora crassa (strain ATCC 24698 / 74-OR23-1A / CBS 708.71 / DSM 1257 / FGSC 987).